The primary structure comprises 293 residues: Probable 2-(5''-triphosphoribosyl)-3'-dephosphocoenzyme-A synthase (293 aa).

The protein belongs to the CitG/MdcB family.

The enzyme catalyses 3'-dephospho-CoA + ATP = 2'-(5''-triphospho-alpha-D-ribosyl)-3'-dephospho-CoA + adenine. Involved in the formation of 2-(5''-phosphoribosyl)-3'-dephosphocoenzyme-A, the prosthetic group of the acyl-carrier protein of the malonate decarboxylase. In Pseudomonas aeruginosa (strain ATCC 15692 / DSM 22644 / CIP 104116 / JCM 14847 / LMG 12228 / 1C / PRS 101 / PAO1), this protein is Probable 2-(5''-triphosphoribosyl)-3'-dephosphocoenzyme-A synthase.